A 382-amino-acid polypeptide reads, in one-letter code: V-type proton ATPase subunit C 1 (382 aa).

Thr2 is subject to N-acetylthreonine.

The protein belongs to the V-ATPase C subunit family. V-ATPase is a heteromultimeric enzyme made up of two complexes: the ATP-hydrolytic V1 complex and the proton translocation V0 complex. The V1 complex consists of three catalytic AB heterodimers that form a heterohexamer, three peripheral stalks each consisting of EG heterodimers, one central rotor including subunits D and F, and the regulatory subunits C and H. The proton translocation complex V0 consists of the proton transport subunit a, a ring of proteolipid subunits c9c'', rotary subunit d, subunits e and f, and the accessory subunits ATP6AP1/Ac45 and ATP6AP2/PRR. In terms of tissue distribution, ubiquitous. Abundant in brain, liver, kidney and testis.

Its subcellular location is the cytoplasmic vesicle. It localises to the secretory vesicle. The protein resides in the synaptic vesicle membrane. It is found in the clathrin-coated vesicle membrane. Subunit of the V1 complex of vacuolar(H+)-ATPase (V-ATPase), a multisubunit enzyme composed of a peripheral complex (V1) that hydrolyzes ATP and a membrane integral complex (V0) that translocates protons. V-ATPase is responsible for acidifying and maintaining the pH of intracellular compartments and in some cell types, is targeted to the plasma membrane, where it is responsible for acidifying the extracellular environment. Subunit C is necessary for the assembly of the catalytic sector of the enzyme and is likely to have a specific function in its catalytic activity. The chain is V-type proton ATPase subunit C 1 (Atp6v1c1) from Mus musculus (Mouse).